We begin with the raw amino-acid sequence, 358 residues long: Peptide chain release factor 1 (358 aa).

Q234 carries the N5-methylglutamine modification.

This sequence belongs to the prokaryotic/mitochondrial release factor family. Methylated by PrmC. Methylation increases the termination efficiency of RF1.

Its subcellular location is the cytoplasm. Peptide chain release factor 1 directs the termination of translation in response to the peptide chain termination codons UAG and UAA. The sequence is that of Peptide chain release factor 1 from Chloroherpeton thalassium (strain ATCC 35110 / GB-78).